Consider the following 178-residue polypeptide: ATP-dependent protease subunit HslV (178 aa).

Thr2 is an active-site residue. Positions 159, 162, and 165 each coordinate Na(+).

This sequence belongs to the peptidase T1B family. HslV subfamily. As to quaternary structure, a double ring-shaped homohexamer of HslV is capped on each side by a ring-shaped HslU homohexamer. The assembly of the HslU/HslV complex is dependent on binding of ATP.

Its subcellular location is the cytoplasm. The catalysed reaction is ATP-dependent cleavage of peptide bonds with broad specificity.. Allosterically activated by HslU binding. Its function is as follows. Protease subunit of a proteasome-like degradation complex believed to be a general protein degrading machinery. The protein is ATP-dependent protease subunit HslV of Buchnera aphidicola subsp. Cinara cedri (strain Cc).